The primary structure comprises 163 residues: Ribonuclease H (163 aa).

An RNase H type-1 domain is found at 1 to 142; sequence MRKQVAIFTD…CDELARTAAC (142 aa). Aspartate 10, glutamate 48, aspartate 70, and aspartate 134 together coordinate Mg(2+).

Belongs to the RNase H family. Monomer. Mg(2+) serves as cofactor.

It is found in the cytoplasm. It catalyses the reaction Endonucleolytic cleavage to 5'-phosphomonoester.. Its function is as follows. Endonuclease that specifically degrades the RNA of RNA-DNA hybrids. The sequence is that of Ribonuclease H from Sodalis glossinidius (strain morsitans).